We begin with the raw amino-acid sequence, 66 residues long: Putative membrane protein insertion efficiency factor (66 aa).

It belongs to the UPF0161 family.

It is found in the cell inner membrane. Its function is as follows. Could be involved in insertion of integral membrane proteins into the membrane. This chain is Putative membrane protein insertion efficiency factor, found in Parasynechococcus marenigrum (strain WH8102).